A 285-amino-acid polypeptide reads, in one-letter code: Glutamate racemase (285 aa).

Substrate is bound by residues 30-31 and 62-63; these read DS and YG. The active-site Proton donor/acceptor is the cysteine 94. 95-96 contributes to the substrate binding site; it reads NT. Residue cysteine 206 is the Proton donor/acceptor of the active site. 207-208 serves as a coordination point for substrate; the sequence is TH.

It belongs to the aspartate/glutamate racemases family.

The enzyme catalyses L-glutamate = D-glutamate. The protein operates within cell wall biogenesis; peptidoglycan biosynthesis. Its function is as follows. Provides the (R)-glutamate required for cell wall biosynthesis. In Pectobacterium atrosepticum (strain SCRI 1043 / ATCC BAA-672) (Erwinia carotovora subsp. atroseptica), this protein is Glutamate racemase.